Reading from the N-terminus, the 64-residue chain is MFAMVTVTVLLLISSGIFCENEKLCSNGGTKCTHHCGKNNTVGICHGQNGNLKCECVEYKRKMF.

The signal sequence occupies residues Met1–Cys19. 3 cysteine pairs are disulfide-bonded: Cys25-Cys45, Cys32-Cys54, and Cys36-Cys56.

In terms of tissue distribution, expressed by the venom gland.

The protein resides in the secreted. In Lychas mucronatus (Chinese swimming scorpion), this protein is Putative neurotoxin-G.